The chain runs to 348 residues: Chitinase (348 aa).

The first 29 residues, 1–29, serve as a signal peptide directing secretion; that stretch reads MKLKKIIPAFPLLSTVAVGLWLTPTQASA. Residues 42-348 form the GH18 domain; the sequence is KVLVGYWHNW…FATRYSNLVK (307 aa). Residue Glu161 is the Proton donor of the active site.

Belongs to the glycosyl hydrolase 18 family.

The protein resides in the secreted. It carries out the reaction Random endo-hydrolysis of N-acetyl-beta-D-glucosaminide (1-&gt;4)-beta-linkages in chitin and chitodextrins.. It functions in the pathway glycan degradation; chitin degradation. Involved in chitin degradation. Catalyzes the cleavage of glycosidic linkages in chitooligosaccharides and in alpha- and beta-chitin. Its activity on chitooligosaccharides increases considerably with degrees of polymerization (the initial rate of hydrolysis for GlcNAc5 is about 130-fold higher than that for GlcNAc3). Its activity is greatly stimulated in the presence of the lytic chitin monooxygenase EfCBM33A, which attacks the crystalline structure of chitin and makes the polymer more accessible to the chitinase; combining the two enzymes leads to rapid and complete depolymerization of crystalline chitin, especially with beta-chitin as a substrate. Is likely involved in a chitin degradation pathway that allows E.faecalis V583 to grow on chitin as a carbon source. The polypeptide is Chitinase (Enterococcus faecalis (strain ATCC 700802 / V583)).